Consider the following 70-residue polypeptide: Gas vesicle protein A (70 aa).

Belongs to the gas vesicle GvpA family. In terms of assembly, the gas vesicle shell is 2 nm thick and consists of a single layer of this protein. It forms helical ribs nearly perpendicular to the long axis of the vesicle.

The protein localises to the gas vesicle shell. Functionally, gas vesicles are hollow, gas filled proteinaceous nanostructures found in some microorganisms. During planktonic growth they allow positioning of the organism at a favorable depth for light or nutrient acquisition. GvpA forms the protein shell. This chain is Gas vesicle protein A, found in Cereibacter sphaeroides (strain ATCC 17023 / DSM 158 / JCM 6121 / CCUG 31486 / LMG 2827 / NBRC 12203 / NCIMB 8253 / ATH 2.4.1.) (Rhodobacter sphaeroides).